Consider the following 285-residue polypeptide: Bifunctional protein FolD (285 aa).

166 to 168 provides a ligand contact to NADP(+); that stretch reads GAS.

Belongs to the tetrahydrofolate dehydrogenase/cyclohydrolase family. In terms of assembly, homodimer.

The enzyme catalyses (6R)-5,10-methylene-5,6,7,8-tetrahydrofolate + NADP(+) = (6R)-5,10-methenyltetrahydrofolate + NADPH. It catalyses the reaction (6R)-5,10-methenyltetrahydrofolate + H2O = (6R)-10-formyltetrahydrofolate + H(+). It functions in the pathway one-carbon metabolism; tetrahydrofolate interconversion. Its function is as follows. Catalyzes the oxidation of 5,10-methylenetetrahydrofolate to 5,10-methenyltetrahydrofolate and then the hydrolysis of 5,10-methenyltetrahydrofolate to 10-formyltetrahydrofolate. This is Bifunctional protein FolD from Thioalkalivibrio sulfidiphilus (strain HL-EbGR7).